The following is a 432-amino-acid chain: Adenylosuccinate synthetase (432 aa).

Residues glycine 13–lysine 19 and glycine 41–threonine 43 each bind GTP. Residue aspartate 14 is the Proton acceptor of the active site. Aspartate 14 and glycine 41 together coordinate Mg(2+). IMP is bound by residues aspartate 14–lysine 17, asparagine 39–histidine 42, threonine 130, arginine 144, glutamine 225, threonine 240, and arginine 306. Histidine 42 (proton donor) is an active-site residue. Position 302 to 308 (threonine 302 to arginine 308) interacts with substrate. GTP contacts are provided by residues arginine 308, lysine 334–aspartate 336, and serine 416–glycine 418.

This sequence belongs to the adenylosuccinate synthetase family. Homodimer. Mg(2+) is required as a cofactor.

The protein localises to the cytoplasm. The catalysed reaction is IMP + L-aspartate + GTP = N(6)-(1,2-dicarboxyethyl)-AMP + GDP + phosphate + 2 H(+). The protein operates within purine metabolism; AMP biosynthesis via de novo pathway; AMP from IMP: step 1/2. Its function is as follows. Plays an important role in the de novo pathway of purine nucleotide biosynthesis. Catalyzes the first committed step in the biosynthesis of AMP from IMP. In Herminiimonas arsenicoxydans, this protein is Adenylosuccinate synthetase.